The following is a 437-amino-acid chain: Transcription factor ets-4 (437 aa).

Residues 1 to 30 (MNGTGSVGHRWNSLSPEPHSGTESTASTPF) form a disordered region. The segment covering 21–30 (GTESTASTPF) has biased composition (polar residues). A Glycyl lysine isopeptide (Lys-Gly) (interchain with G-Cter in SUMO) cross-link involves residue lysine 32. Serine 73 carries the post-translational modification Phosphoserine. A Glycyl lysine isopeptide (Lys-Gly) (interchain with G-Cter in SUMO) cross-link involves residue lysine 83. Residues 120–202 (HLIQDISTTC…AQLQVWKTGT (83 aa)) form the PNT domain. Residues 275–302 (QGTVLPSPSNSDTSSNGSSQDMNDDDID) form a disordered region. Low complexity predominate over residues 280–293 (PSPSNSDTSSNGSS). Positions 349–432 (VHLWQFIREL…KKQRLVYKFL (84 aa)) form a DNA-binding region, ETS.

Belongs to the ETS family. May interact with cebp-1. May interact with tdpt-1 to facilitate its sumoylation. Phosphorylation is required for axon regeneration. Post-translationally, sumoylated; sumoylation inhibits phosphorylation, which is required for probable interaction with cebp-1 and consequently the expression of svh-2. Expressed in cells of the anterior and posterior bulbs of the pharynx, seam cells, a few unidentified cells of the vulva, the hypodermis, several unidentified neurons, labial socket cells of the head and rectal cells.

The protein localises to the nucleus. Transcription factor which binds to 5'-GGAA/T-3' DNA consensus sequences. Both positively and negatively regulates the expression of target genes. Plays a role in the regulation of adult lifespan, which may in part be through modulation of daf-16 activity. Regulates the expression of genes such as svh-2 in response to axon injury and in addition, may function downstream of the cAMP signaling pathway to promote axon regeneration. Regulates the expression of lipid metabolism genes and may also control the expression of the RNA-binding protein rege-1 which too has been implicated in the control of fat accumulation. The chain is Transcription factor ets-4 from Caenorhabditis elegans.